The primary structure comprises 554 residues: MPTVDDILEQVGESGWFQKQAFLILCLLSAAFAPICVGIVFLGFTPDHHCQSPGVAELSQRCGWSPAEELNYTVPGLGPAGEAFLGQCRRYEVDWNQSALSCVDPLASLATNRSHLPLGPCQDGWVYDTPGSSIVTEFNLVCADSWKLDLFQSCLNAGFLFGSLGVGYFADRFGRKLCLLGTVLVNAVSGVLMAFSPNYMSMLLFRLLQGLVSKGNWMAGYTLITEFVGSGSRRTVAIMYQMAFTVGLVALTGLAYALPHWRWLQLAVSLPTFLFLLYYWCVPESPRWLLSQKRNTEAIKIMDHIAQKNGKLPPADLKMLSLEEDVTEKLSPSFADLFRTPRLRKRTFILMYLWFTDSVLYQGLILHMGATSGNLYLDFLYSALVEIPGAFIALITIDRVGRIYPMAMSNLLAGAACLVMIFISPDLHWLNIIIMCVGRMGITIAIQMICLVNAELYPTFVRNLGVMVCSSLCDIGGIITPFIVFRLREVWQALPLILFAVLGLLAAGVTLLLPETKGVALPETMKDAENLGRKAKPKENTIYLKVQTSEPSGT.

Residues 1 to 21 (MPTVDDILEQVGESGWFQKQA) lie on the Cytoplasmic side of the membrane. A helical membrane pass occupies residues 22–42 (FLILCLLSAAFAPICVGIVFL). At 43 to 149 (GFTPDHHCQS…LVCADSWKLD (107 aa)) the chain is on the extracellular side. N-linked (GlcNAc...) asparagine glycosylation is present at asparagine 71. Residues 150 to 170 (LFQSCLNAGFLFGSLGVGYFA) traverse the membrane as a helical segment. The Cytoplasmic portion of the chain corresponds to 171–176 (DRFGRK). A helical membrane pass occupies residues 177 to 197 (LCLLGTVLVNAVSGVLMAFSP). Topologically, residues 198–206 (NYMSMLLFR) are extracellular. A helical transmembrane segment spans residues 207–229 (LLQGLVSKGNWMAGYTLITEFVG). Over 230–235 (SGSRRT) the chain is Cytoplasmic. The helical transmembrane segment at 236 to 256 (VAIMYQMAFTVGLVALTGLAY) threads the bilayer. The Extracellular portion of the chain corresponds to 257-262 (ALPHWR). Residues 263–283 (WLQLAVSLPTFLFLLYYWCVP) traverse the membrane as a helical segment. The Proline-rich sequence signature appears at 283–287 (PESPR). The Cytoplasmic segment spans residues 284–347 (ESPRWLLSQK…FRTPRLRKRT (64 aa)). Position 333 is a phosphoserine (serine 333). A helical transmembrane segment spans residues 348–368 (FILMYLWFTDSVLYQGLILHM). Residues 369 to 376 (GATSGNLY) are Extracellular-facing. Residues 377–397 (LDFLYSALVEIPGAFIALITI) traverse the membrane as a helical segment. Topologically, residues 398–402 (DRVGR) are cytoplasmic. Residues 403–423 (IYPMAMSNLLAGAACLVMIFI) form a helical membrane-spanning segment. Topologically, residues 424-431 (SPDLHWLN) are extracellular. A helical membrane pass occupies residues 432-452 (IIIMCVGRMGITIAIQMICLV). Residues 453–464 (NAELYPTFVRNL) are Cytoplasmic-facing. The helical transmembrane segment at 465–485 (GVMVCSSLCDIGGIITPFIVF) threads the bilayer. The Extracellular portion of the chain corresponds to 486–492 (RLREVWQ). The helical transmembrane segment at 493 to 513 (ALPLILFAVLGLLAAGVTLLL) threads the bilayer. The Cytoplasmic segment spans residues 514–554 (PETKGVALPETMKDAENLGRKAKPKENTIYLKVQTSEPSGT). Threonine 541 carries the phosphothreonine modification.

It belongs to the major facilitator (TC 2.A.1) superfamily. Organic cation transporter (TC 2.A.1.19) family. Phosphorylated. As to expression, widely expressed with high level in liver. In liver, expressed around the central vein. Expressed in kidney. Expressed in small intestine enterocytes. Localized to peritubular myoid cells, Leydig cells and moderately to the basal membrane of Sertoli cells in testes. Expressed in tracheal and bronchial ciliated epithelium in the respiratory tract. Also expressed in skeletal muscle, stomach, spleen, heart, placentacolon, brain, granulycytes and lympohocytes. In terms of tissue distribution, expressed in liver and in glial cell lines. Expressed in glial cell lines. Not expressed in liver.

It is found in the basolateral cell membrane. The protein localises to the apical cell membrane. Its subcellular location is the lateral cell membrane. It localises to the basal cell membrane. The protein resides in the cell membrane. The enzyme catalyses 1-methylnicotinamide(out) = 1-methylnicotinamide(in). It carries out the reaction dopamine(out) = dopamine(in). The catalysed reaction is serotonin(out) = serotonin(in). It catalyses the reaction (R)-adrenaline(out) = (R)-adrenaline(in). The enzyme catalyses histamine(out) = histamine(in). It carries out the reaction guanidine(out) = guanidine(in). The catalysed reaction is acetylcholine(in) = acetylcholine(out). It catalyses the reaction thiamine(in) = thiamine(out). The enzyme catalyses agmatine(out) = agmatine(in). It carries out the reaction putrescine(out) = putrescine(in). The catalysed reaction is spermidine(in) = spermidine(out). It catalyses the reaction L-histidyl-L-proline diketopiperazine(in) = L-histidyl-L-proline diketopiperazine(out). The enzyme catalyses (R)-salsolinol(in) = (R)-salsolinol(out). It carries out the reaction prostaglandin F2alpha(out) = prostaglandin F2alpha(in). The catalysed reaction is prostaglandin E2(out) = prostaglandin E2(in). Its activity is regulated as follows. Phosphorylation of the transporter leads to changes in its substrate affinity, resulting in a regulation of the transport activity. In contrast with rat ortholog, ASP uptake is inhibited by protein kinase A (PKA) and C (PKC) activation. ASP uptake is also endogenously activated by calmodulin, the calmodulin-dependent kinase II and LCK tyrosine kinase. Inhibited by cGMP, most likely through a cGMP-binding protein that interacts with OCT1. Electrogenic voltage-dependent transporter that mediates the transport of a variety of organic cations such as endogenous bioactive amines, cationic drugs and xenobiotics. Functions as a pH- and Na(+)-independent, bidirectional transporter. Cation cellular uptake or release is driven by the electrochemical potential (i.e. membrane potential and concentration gradient) and substrate selectivity. Hydrophobicity is a major requirement for recognition in polyvalent substrates and inhibitors. Primarily expressed at the basolateral membrane of hepatocytes and proximal tubules and involved in the uptake and disposition of cationic compounds by hepatic and renal clearance from the blood flow. Most likely functions as an uptake carrier in enterocytes contributing to the intestinal elimination of organic cations from the systemic circulation. Transports endogenous monoamines such as N-1-methylnicotinamide (NMN), guanidine, histamine, neurotransmitters dopamine, serotonin and adrenaline. Also transports natural polyamines such as spermidine, agmatine and putrescine at low affinity, but relatively high turnover. Involved in the hepatic uptake of vitamin B1/thiamine, hence regulating hepatic lipid and energy metabolism. Mediates the bidirectional transport of acetylcholine (ACh) at the apical membrane of ciliated cell in airway epithelium, thereby playing a role in luminal release of ACh from bronchial epithelium. Transports dopaminergic neuromodulators cyclo(his-pro) and salsolinol with lower efficency. Also capable of transporting non-amine endogenous compounds such as prostaglandin E2 (PGE2) and prostaglandin F2-alpha (PGF2-alpha). May contribute to the transport of cationic compounds in testes across the blood-testis-barrier. Also involved in the uptake of xenobiotics tributylmethylammonium (TBuMA), quinidine, N-methyl-quinine (NMQ), N-methyl-quinidine (NMQD) N-(4,4-azo-n-pentyl)-quinuclidine (APQ), azidoprocainamide methoiodide (AMP), N-(4,4-azo-n-pentyl)-21-deoxyajmalinium (APDA) and 4-(4-(dimethylamino)styryl)-N-methylpyridinium (ASP). In terms of biological role, mediates the uptake of 1-methyl-4-phenylpyridinium (MPP(+)). Its function is as follows. Not able to uptake 1-methyl-4-phenylpyridinium (MPP(+)). This chain is Solute carrier family 22 member 1, found in Homo sapiens (Human).